A 166-amino-acid chain; its full sequence is NADPH-dependent 7-cyano-7-deazaguanine reductase (166 aa).

Cys57 serves as the catalytic Thioimide intermediate. Asp64 acts as the Proton donor in catalysis. Substrate contacts are provided by residues 79–81 (VES) and 98–99 (HE).

The protein belongs to the GTP cyclohydrolase I family. QueF type 1 subfamily.

The protein localises to the cytoplasm. It carries out the reaction 7-aminomethyl-7-carbaguanine + 2 NADP(+) = 7-cyano-7-deazaguanine + 2 NADPH + 3 H(+). Its pathway is tRNA modification; tRNA-queuosine biosynthesis. Catalyzes the NADPH-dependent reduction of 7-cyano-7-deazaguanine (preQ0) to 7-aminomethyl-7-deazaguanine (preQ1). This is NADPH-dependent 7-cyano-7-deazaguanine reductase from Staphylococcus aureus (strain MRSA252).